Here is a 505-residue protein sequence, read N- to C-terminus: Glycerol kinase (505 aa).

Residue Thr14 participates in ADP binding. Residues Thr14, Thr15, and Ser16 each coordinate ATP. Thr14 lines the sn-glycerol 3-phosphate pocket. Arg18 contributes to the ADP binding site. The sn-glycerol 3-phosphate site is built by Arg84, Glu85, Tyr136, and Asp246. Glycerol-binding residues include Arg84, Glu85, Tyr136, Asp246, and Gln247. Residues Thr268 and Gly311 each contribute to the ADP site. The ATP site is built by Thr268, Gly311, Gln315, and Gly412. ADP contacts are provided by Gly412 and Asn416.

This sequence belongs to the FGGY kinase family.

It carries out the reaction glycerol + ATP = sn-glycerol 3-phosphate + ADP + H(+). It participates in polyol metabolism; glycerol degradation via glycerol kinase pathway; sn-glycerol 3-phosphate from glycerol: step 1/1. Inhibited by fructose 1,6-bisphosphate (FBP). Functionally, key enzyme in the regulation of glycerol uptake and metabolism. Catalyzes the phosphorylation of glycerol to yield sn-glycerol 3-phosphate. In Vibrio parahaemolyticus serotype O3:K6 (strain RIMD 2210633), this protein is Glycerol kinase.